Reading from the N-terminus, the 422-residue chain is Dihydroorotase (422 aa).

Residues histidine 59 and histidine 61 each coordinate Zn(2+). Residues 61-63 (HFR) and asparagine 93 contribute to the substrate site. 3 residues coordinate Zn(2+): aspartate 150, histidine 177, and histidine 230. Asparagine 276 serves as a coordination point for substrate. Aspartate 303 is a binding site for Zn(2+). Aspartate 303 is an active-site residue. Histidine 307 contributes to the substrate binding site.

Belongs to the metallo-dependent hydrolases superfamily. DHOase family. Class I DHOase subfamily. Requires Zn(2+) as cofactor.

It carries out the reaction (S)-dihydroorotate + H2O = N-carbamoyl-L-aspartate + H(+). It functions in the pathway pyrimidine metabolism; UMP biosynthesis via de novo pathway; (S)-dihydroorotate from bicarbonate: step 3/3. In terms of biological role, catalyzes the reversible cyclization of carbamoyl aspartate to dihydroorotate. The protein is Dihydroorotase of Streptococcus pyogenes serotype M3 (strain ATCC BAA-595 / MGAS315).